A 958-amino-acid polypeptide reads, in one-letter code: UvrABC system protein A (958 aa).

The region spanning 1 to 232 (MQSKSIKIQG…IETALKLGEG (232 aa)) is the ABC transporter 1 domain. 33 to 40 (GLSGSGKS) contacts ATP. The segment at 252–279 (CPICGFSIGELEPRLFSFNSPFGACPSC) adopts a C4-type zinc-finger fold. ABC transporter domains lie at 315 to 593 (QYYP…KYLS) and 604 to 935 (RRKP…GKYL). 639-646 (GVSGSGKS) lines the ATP pocket. A C4-type zinc finger spans residues 738 to 764 (CEACRGDGILKIEMHFLPDVYVPCEVC).

The protein belongs to the ABC transporter superfamily. UvrA family. In terms of assembly, forms a heterotetramer with UvrB during the search for lesions.

The protein resides in the cytoplasm. In terms of biological role, the UvrABC repair system catalyzes the recognition and processing of DNA lesions. UvrA is an ATPase and a DNA-binding protein. A damage recognition complex composed of 2 UvrA and 2 UvrB subunits scans DNA for abnormalities. When the presence of a lesion has been verified by UvrB, the UvrA molecules dissociate. This Oceanobacillus iheyensis (strain DSM 14371 / CIP 107618 / JCM 11309 / KCTC 3954 / HTE831) protein is UvrABC system protein A.